A 216-amino-acid chain; its full sequence is Probable GTP-binding protein EngB (216 aa).

One can recognise an EngB-type G domain in the interval 27–201 (EGIEVAFAGR…REKLDTWFSE (175 aa)). GTP contacts are provided by residues 35 to 42 (GRSNAGKS), 62 to 66 (GRTQL), 80 to 83 (DLPG), 147 to 150 (TKAD), and 180 to 182 (FSS). Mg(2+)-binding residues include Ser-42 and Thr-64.

It belongs to the TRAFAC class TrmE-Era-EngA-EngB-Septin-like GTPase superfamily. EngB GTPase family. The cofactor is Mg(2+).

Necessary for normal cell division and for the maintenance of normal septation. This Yersinia pestis bv. Antiqua (strain Angola) protein is Probable GTP-binding protein EngB.